Consider the following 391-residue polypeptide: Pyoverdine export membrane fusion protein PvdR (391 aa).

Residues 1–24 (MRRTRSTRRALLVAVCLSPLIALA) form the signal peptide. A coiled-coil region spans residues 108–180 (IEMLKAQLAE…QASLRSDEAE (73 aa)). Residues 263–289 (LPVPPKPLDQSNQGGGSPTSGSGGQSG) are disordered. A compositionally biased stretch (gly residues) spans 275–289 (QGGGSPTSGSGGQSG).

Belongs to the membrane fusion protein (MFP) (TC 8.A.1) family. Part of the tripartite efflux system PvdRT-OpmQ, which is composed of an inner membrane component with both ATPase and permease domains, PvdT, a periplasmic membrane fusion protein, PvdR, and an outer membrane component, OpmQ.

The protein localises to the periplasm. Its function is as follows. Part of the tripartite efflux system PvdRT-OpmQ required for the secretion into the extracellular milieu of the siderophore pyoverdine (PVD), which is involved in iron acquisition. This subunit is an adapter protein that stimulates the ATPase activity of PvdT and connects the inner and outer membrane components. The system is responsible for export of newly synthesized PVD after the final steps of biosynthesis have taken place in the periplasm. It is also responsible for recycling of PVD after internalization of ferri-PVD into the periplasm by the outer-membrane receptor FpvA and release of iron from PVD, thus making PVD available for new cycles of iron uptake. In addition, can expel unwanted metals complexed with PVD from the periplasm into the extracellular medium. Does not contribute to resistance to antibiotics belonging to the classes of tetracyclines, aminoglycosides, beta-lactams and macrolides, and chloramphenicol. The chain is Pyoverdine export membrane fusion protein PvdR from Pseudomonas aeruginosa (strain ATCC 15692 / DSM 22644 / CIP 104116 / JCM 14847 / LMG 12228 / 1C / PRS 101 / PAO1).